A 508-amino-acid chain; its full sequence is Erythropoietin receptor (508 aa).

The signal sequence occupies residues 1–24 (MDHLGASLWPQVGSLCLLLAGAAW). At 25–250 (APPPNLPDPK…SLLTPSDLDP (226 aa)) the chain is on the extracellular side. C52 and C62 form a disulfide bridge. Residue N76 is glycosylated (N-linked (GlcNAc...) asparagine). A disulfide bond links C91 and C107. The 101-residue stretch at 147–247 (APVGLVARLA…EPVSLLTPSD (101 aa)) folds into the Fibronectin type-III domain. Residues 233 to 237 (WSAWS) carry the WSXWS motif motif. Residues 251 to 273 (LILTLSLILVVILVLLTVLALLS) traverse the membrane as a helical segment. Over 274–508 (HRRALKQKIW…PLPPSYVACS (235 aa)) the chain is Cytoplasmic. A Glycyl lysine isopeptide (Lys-Gly) (interchain with G-Cter in ubiquitin) cross-link involves residue K281. A Box 1 motif motif is present at residues 282 to 290 (IWPGIPSPE). Phosphotyrosine; by JAK2 is present on residues Y368 and Y426. The short motif at 452–457 (LKYLYL) is the ITIM motif element. K453 is covalently cross-linked (Glycyl lysine isopeptide (Lys-Gly) (interchain with G-Cter in ubiquitin)). Residues Y454, Y456, Y468, Y485, Y489, and Y504 each carry the phosphotyrosine; by JAK2 modification. A required for high-affinity SOCS3 binding region spans residues 454–456 (YLY). Positions 467–494 (DYSSGDSQGAQGGLSDGPYSNPYENSLI) are disordered.

It belongs to the type I cytokine receptor family. Type 1 subfamily. As to quaternary structure, forms homodimers on EPO stimulation. The tyrosine-phosphorylated form interacts with several SH2 domain-containing proteins including LYN, the adapter protein SH2B2, PTPN6, PTPN11, JAK2, PI3 kinases, STAT5A/B, SOCS3, CRKL. Interacts with INPP5D/SHIP1. SH2B2 binding inhibits the JAK-STAT signaling. Interacts with RHEX; this interaction occurs in a erythropoietin (EPO)-dependent manner. Interacts with ATXN2L. On EPO stimulation, phosphorylated on C-terminal tyrosine residues by JAK2. The phosphotyrosine motifs are also recruitment sites for several SH2-containing proteins and adapter proteins which mediate cell proliferation. Phosphorylation on Tyr-454 is required for PTPN6 interaction, Tyr-426 for PTPN11. Tyr-426 is also required for SOCS3 binding, but Tyr-454/Tyr-456 motif is the preferred binding site. Post-translationally, ubiquitinated by the ECS(SOCS2) complex following ligand-binding and phosphorylation by JAK2, leading to its degradation by the proteasome. Regulation by the ECS(SOCS2) complex acts as a negative feedback loop of erythropoietin-mediated signaling pathway. Ubiquitination at Lys-281 mediates receptor internalization, whereas ubiquitination at Lys-453 promotes trafficking of activated receptors to the lysosomes for degradation. Ubiquitinated by NOSIP; appears to be either multi-monoubiquitinated or polyubiquitinated. Ubiquitination mediates proliferation and survival of EPO-dependent cells. As to expression, erythroid cells and erythroid progenitor cells. Isoform EPOR-F is the most abundant form in EPO-dependent erythroleukemia cells and in late-stage erythroid progenitors. In terms of tissue distribution, isoform EPOR-S and isoform EPOR-T are the predominant forms in bone marrow. As to expression, isoform EPOR-S and isoform EPOR-T are the predominant forms in bone marrow. Isoform EPOR-T is the most abundant from in early-stage erythroid progenitor cells.

It localises to the cell membrane. The protein localises to the secreted. Functionally, receptor for erythropoietin, which mediates erythropoietin-induced erythroblast proliferation and differentiation. Upon EPO stimulation, EPOR dimerizes triggering the JAK2/STAT5 signaling cascade. In some cell types, can also activate STAT1 and STAT3. May also activate the LYN tyrosine kinase. In terms of biological role, acts as a dominant-negative receptor of EPOR-mediated signaling. The polypeptide is Erythropoietin receptor (Homo sapiens (Human)).